A 210-amino-acid polypeptide reads, in one-letter code: Thiamine-phosphate synthase (210 aa).

Residues 39 to 43 (QLREK) and asparagine 71 each bind 4-amino-2-methyl-5-(diphosphooxymethyl)pyrimidine. Mg(2+)-binding residues include aspartate 72 and aspartate 91. Serine 110 lines the 4-amino-2-methyl-5-(diphosphooxymethyl)pyrimidine pocket. 136–138 (TST) contacts 2-[(2R,5Z)-2-carboxy-4-methylthiazol-5(2H)-ylidene]ethyl phosphate. Lysine 139 serves as a coordination point for 4-amino-2-methyl-5-(diphosphooxymethyl)pyrimidine. Residues glycine 166 and 186–187 (VS) contribute to the 2-[(2R,5Z)-2-carboxy-4-methylthiazol-5(2H)-ylidene]ethyl phosphate site.

It belongs to the thiamine-phosphate synthase family. Requires Mg(2+) as cofactor.

The enzyme catalyses 2-[(2R,5Z)-2-carboxy-4-methylthiazol-5(2H)-ylidene]ethyl phosphate + 4-amino-2-methyl-5-(diphosphooxymethyl)pyrimidine + 2 H(+) = thiamine phosphate + CO2 + diphosphate. It carries out the reaction 2-(2-carboxy-4-methylthiazol-5-yl)ethyl phosphate + 4-amino-2-methyl-5-(diphosphooxymethyl)pyrimidine + 2 H(+) = thiamine phosphate + CO2 + diphosphate. It catalyses the reaction 4-methyl-5-(2-phosphooxyethyl)-thiazole + 4-amino-2-methyl-5-(diphosphooxymethyl)pyrimidine + H(+) = thiamine phosphate + diphosphate. It participates in cofactor biosynthesis; thiamine diphosphate biosynthesis; thiamine phosphate from 4-amino-2-methyl-5-diphosphomethylpyrimidine and 4-methyl-5-(2-phosphoethyl)-thiazole: step 1/1. Its function is as follows. Condenses 4-methyl-5-(beta-hydroxyethyl)thiazole monophosphate (THZ-P) and 2-methyl-4-amino-5-hydroxymethyl pyrimidine pyrophosphate (HMP-PP) to form thiamine monophosphate (TMP). This Ruminiclostridium cellulolyticum (strain ATCC 35319 / DSM 5812 / JCM 6584 / H10) (Clostridium cellulolyticum) protein is Thiamine-phosphate synthase.